The sequence spans 436 residues: Eukaryotic peptide chain release factor subunit 1-1 (436 aa).

Belongs to the eukaryotic release factor 1 family. In terms of assembly, heterodimer of two subunits, one of which binds GTP.

Its subcellular location is the cytoplasm. Functionally, directs the termination of nascent peptide synthesis (translation) in response to the termination codons UAA, UAG and UGA. Modulates plant growth and development. This chain is Eukaryotic peptide chain release factor subunit 1-1 (ERF1-1), found in Arabidopsis thaliana (Mouse-ear cress).